The chain runs to 861 residues: MAHYPTRLKTRKTYSWVGRPLLDRKLHYQTYREMCVKTEGCSTEIHIQIGQFVLIEGDDDENPYVAKLLELFEDDSDPPPKKRARVQWFVRFCEVPACKRHLLGRKPGAQEIFWYDYPACDSNINAETIIGLVRVIPLAPKDVVPTNLKNEKTLFVKLSWNEKKFRPLSSELFAELNKPQESAAKCQKPVRAKSKSAESPSWTPAEHVAKRIESRHSASKSRQTPTHPLTPRARKRLELGNLGNPQMSQQTSCASLDSPGRIKRKVAFSEITSPSKRSQPDKLQTLSPALKAPEKTRETGLSYTEDDKKASPEHRIILRTRIAASKTIDIREERTLTPISGGQRSSVVPSVILKPENIKKRDAKEAKAQNEATSTPHRIRRKSSVLTMNRIRQQLRFLGNSKSDQEEKEILPAAEISDSSSDEEEASTPPLPRRAPRTVSRNLRSSLKSSLHTLTKVPKKSLKPRTPRCAAPQIRSRSLAAQEPASVLEEARLRLHVSAVPESLPCREQEFQDIYNFVESKLLDHTGGCMYISGVPGTGKTATVHEVIRCLQQAAQANDVPPFQYIEVNGMKLTEPHQVYVQILQKLTGQKATANHAAELLAKQFCTRGSPQETTVLLVDELDLLWTHKQDIMYNLFDWPTHKEARLVVLAIANTMDLPERIMMNRVSSRLGLTRMCFQPYTYSQLQQILRSRLKHLKAFEDDAIQLVARKVAALSGDARRCLDICRRATEICEFSQQKPDSPGLVTIAHSMEAVDEMFSSSYITAIKNSSVLEQSFLRAILAEFRRSGLEEATFQQIYSQHVALCRMEGLPYPTMSETMAVCSHLGSCRLLLVEPSRNDLLLRVRLNVSQDDVLYALKDE.

Residues 45-171 (IHIQIGQFVL…EKKFRPLSSE (127 aa)) form the BAH domain. Residues 183–233 (AAKCQKPVRAKSKSAESPSWTPAEHVAKRIESRHSASKSRQTPTHPLTPRA) are disordered. Serine 199 bears the Phosphoserine mark. Threonine 203 is subject to Phosphothreonine. Basic and acidic residues predominate over residues 207–216 (HVAKRIESRH). Phosphoserine is present on residues serine 252, serine 255, serine 273, and serine 287. Residues 269 to 312 (SEITSPSKRSQPDKLQTLSPALKAPEKTRETGLSYTEDDKKASP) are disordered. Residues 270–287 (EITSPSKRSQPDKLQTLS) are compositionally biased toward polar residues. Lysine 326 is subject to N6-acetyllysine. Threonine 337 carries the post-translational modification Phosphothreonine. Serine 340 carries the phosphoserine modification. Disordered stretches follow at residues 360 to 382 (KRDAKEAKAQNEATSTPHRIRRK) and 412 to 476 (PAAE…QIRS). Phosphoserine is present on residues serine 417 and serine 420. Positions 440-456 (SRNLRSSLKSSLHTLTK) are enriched in low complexity. Residues 457–466 (VPKKSLKPRT) show a composition bias toward basic residues. Serine 478 is subject to Phosphoserine. Residues valine 500 and 534–542 (GVPGTGKTA) each bind ATP. The interval 501 to 861 (PESLPCREQE…DDVLYALKDE (361 aa)) is necessary and sufficient for ORC complex assembly. Mg(2+) contacts are provided by aspartate 620 and glutamate 621. ATP is bound by residues glutamate 621, asparagine 654, and arginine 720.

The protein belongs to the ORC1 family. Component of ORC, a complex composed of at least 6 subunits: ORC1, ORC2, ORC3, ORC4, ORC5 and ORC6. ORC is regulated in a cell-cycle dependent manner. It is sequentially assembled at the exit from anaphase of mitosis and disassembled as cells enter S phase. Interacts with CDC6 and KAT7/HBO1. Interacts with LRWD1 predominantly during the G1 phase and with less affinity during mitosis, when phosphorylated. Post-translationally, phosphorylated during mitosis.

It localises to the nucleus. Component of the origin recognition complex (ORC) that binds origins of replication. DNA-binding is ATP-dependent. The DNA sequences that define origins of replication have not been identified yet. ORC is required to assemble the pre-replication complex necessary to initiate DNA replication. This is Origin recognition complex subunit 1 (ORC1) from Homo sapiens (Human).